Here is a 31-residue protein sequence, read N- to C-terminus: Malate dehydrogenase, mitochondrial (31 aa).

NAD(+)-binding positions include 9-19 (GIGQPLSLLMK) and 20-31 (DDLFNINAGIVK).

The protein belongs to the LDH/MDH superfamily. MDH type 1 family. As to quaternary structure, homodimer.

Its subcellular location is the mitochondrion matrix. It catalyses the reaction (S)-malate + NAD(+) = oxaloacetate + NADH + H(+). This Imperata cylindrica (Cogon grass) protein is Malate dehydrogenase, mitochondrial.